Consider the following 430-residue polypeptide: Trigger factor (430 aa).

The PPIase FKBP-type domain occupies 163–248; it reads GDIAVIDFEG…LNSLKRKNMP (86 aa).

This sequence belongs to the FKBP-type PPIase family. Tig subfamily.

The protein resides in the cytoplasm. The enzyme catalyses [protein]-peptidylproline (omega=180) = [protein]-peptidylproline (omega=0). In terms of biological role, involved in protein export. Acts as a chaperone by maintaining the newly synthesized protein in an open conformation. Functions as a peptidyl-prolyl cis-trans isomerase. The sequence is that of Trigger factor from Brevibacillus brevis (strain 47 / JCM 6285 / NBRC 100599).